The primary structure comprises 536 residues: Probable cytochrome P450 318a1 (536 aa).

Residues 439–457 (EEEQLSKGHNDSGSGEKRR) are compositionally biased toward basic and acidic residues. The tract at residues 439 to 460 (EEEQLSKGHNDSGSGEKRRQRD) is disordered. Residue C477 coordinates heme.

It belongs to the cytochrome P450 family. Requires heme as cofactor.

It localises to the endoplasmic reticulum membrane. Its subcellular location is the microsome membrane. In terms of biological role, may be involved in the metabolism of insect hormones and in the breakdown of synthetic insecticides. The protein is Probable cytochrome P450 318a1 (Cyp318a1) of Drosophila melanogaster (Fruit fly).